Here is a 98-residue protein sequence, read N- to C-terminus: Integration host factor subunit alpha (98 aa).

The tract at residues 51–71 (NFDLRDKNERPGRNPKTGEDI) is disordered. Over residues 53 to 69 (DLRDKNERPGRNPKTGE) the composition is skewed to basic and acidic residues.

This sequence belongs to the bacterial histone-like protein family. As to quaternary structure, heterodimer of an alpha and a beta chain.

Its function is as follows. This protein is one of the two subunits of integration host factor, a specific DNA-binding protein that functions in genetic recombination as well as in transcriptional and translational control. The polypeptide is Integration host factor subunit alpha (Vibrio cholerae serotype O1 (strain ATCC 39541 / Classical Ogawa 395 / O395)).